A 121-amino-acid polypeptide reads, in one-letter code: UPF0344 protein BCG9842_B4136 (121 aa).

The next 4 membrane-spanning stretches (helical) occupy residues 6-26 (ITAWALGLILFFVAYSLYSAG), 38-58 (LMYIIIIVTGFMLYMSIVKTA), 65-85 (WYGLKMLTGILVIGGMEMVLV), and 92-112 (PTGAVWGLFIVALVAVFYLGL).

Belongs to the UPF0344 family.

It is found in the cell membrane. This is UPF0344 protein BCG9842_B4136 from Bacillus cereus (strain G9842).